A 365-amino-acid chain; its full sequence is Chorismate synthase (365 aa).

A disordered region spans residues 41 to 61 (IQKELDRRRPGQSEVSTPRHE). Residue arginine 48 coordinates NADP(+). FMN-binding positions include 125 to 127 (RSS), glycine 285, 300 to 304 (KPTPS), and arginine 327.

Belongs to the chorismate synthase family. The cofactor is FMNH2.

The catalysed reaction is 5-O-(1-carboxyvinyl)-3-phosphoshikimate = chorismate + phosphate. It participates in metabolic intermediate biosynthesis; chorismate biosynthesis; chorismate from D-erythrose 4-phosphate and phosphoenolpyruvate: step 7/7. In terms of biological role, catalyzes the anti-1,4-elimination of the C-3 phosphate and the C-6 proR hydrogen from 5-enolpyruvylshikimate-3-phosphate (EPSP) to yield chorismate, which is the branch point compound that serves as the starting substrate for the three terminal pathways of aromatic amino acid biosynthesis. This reaction introduces a second double bond into the aromatic ring system. In Methanosarcina barkeri (strain Fusaro / DSM 804), this protein is Chorismate synthase.